The following is an 807-amino-acid chain: MTYRIKKWQKLSTITLLMAGVITLNGGEFRSVDKHQIAVADTNVQTPDYEKLRNTWLDVNYGYDKYDENNPDMKKKFDATEKEATNLLKEMKTESGRKYLWSGAETLETNSSHMTRTYRNIEKIAEAMRNPKTTLNTDENKKKVKDALEWLHKNAYGKEPDKKVKELSENFTKTTGKNTNLNWWDYEIGTPKSLTNTLILLNDQFSNEEKKKFTAPIKTFAPDSDKILSSVGKAELAKGGNLVDISKVKLLECIIEEDKDMMKKSIDSFNKVFTYVQDSATGKERNGFYKDGSYIDHQDVPYTGAYGVVLLEGISQMMPMIKETPFNDKTQNDTTLKSWIDDGFMPLIYKGEMMDLSRGRAISRENETSHSASATVMKSLLRLSDAMDDSTKAKYKKIVKSSVESDSSYKQNDYLNSYSDIDKMKSLMTDNSISKNGLTQQLKIYNDMDRVTYHNKDLDFAFGLSMTSKNVARYESINGENLKGWHTGAGMSYLYNSDVKHYHDNFWVTADMKRLSGTTTLDNEILKDTDDKKSSKTFVGGTKVDDQHASIGMDFENQDKTLTAKKSYFILNDKIVFLGTGIKSTDSSKNPVTTIENRKANGYTLYTDDKQTTNSDNQENNSVFLESTDTKKNIGYHFLNKPKITVKKESHTGKWKEINKSQKDTQKTDEYYEVTQKHSNSDNKYGYVLYPGLSKDVFKTKKDEVTVVKQEDDFHVVKDNESVWAGVNYSNSTQTFDINNTKVEVKAKGMFILKKKDDNTYECSFYNPESTNSASDIESKISMTGYSITNKNTSTSNESGVHFELTK.

A signal peptide spans 1–40 (MTYRIKKWQKLSTITLLMAGVITLNGGEFRSVDKHQIAVA). Residues N241, H297, and Y306 contribute to the active site.

It belongs to the polysaccharide lyase 8 family.

The protein localises to the secreted. It carries out the reaction [hyaluronan](n) = n 3-(4-deoxy-beta-D-gluc-4-enuronosyl)-N-acetyl-D-glucosamine + H2O. In Staphylococcus aureus (strain NCTC 8325 / PS 47), this protein is Hyaluronate lyase.